We begin with the raw amino-acid sequence, 495 residues long: RuBisCO large subunit-binding protein subunit alpha (495 aa).

The protein belongs to the chaperonin (HSP60) family. Oligomer of probably six alpha and six beta subunits.

Its subcellular location is the plastid. It localises to the chloroplast. Functionally, this protein binds RuBisCO small and large subunits and is implicated in the assembly of the enzyme oligomer. The sequence is that of RuBisCO large subunit-binding protein subunit alpha from Ricinus communis (Castor bean).